Consider the following 274-residue polypeptide: Glutamate racemase (274 aa).

Substrate-binding positions include 9-10 (DS) and 41-42 (YG). C73 acts as the Proton donor/acceptor in catalysis. 74 to 75 (NT) contacts substrate. The active-site Proton donor/acceptor is the C183. Residue 184-185 (TH) coordinates substrate.

Belongs to the aspartate/glutamate racemases family.

The catalysed reaction is L-glutamate = D-glutamate. It participates in cell wall biogenesis; peptidoglycan biosynthesis. Its function is as follows. Provides the (R)-glutamate required for cell wall biosynthesis. The polypeptide is Glutamate racemase (Shewanella baltica (strain OS185)).